We begin with the raw amino-acid sequence, 774 residues long: MRGPIVLHICLAFCSLLLFSVATQCLAFPKIERRREIAHVHAEKGQSDKMNTDDLENSSVTSKQTPQLVVSEDPMMMSAVPSATSLNKAFSINKETQPGQAGLMQTERPGVSTPTESGVPSAEEVFGSSQPERISPESGLAKAMLTIAITATPSLTVDEKEELLTSTNFQPIVEEITETTKGFLKYMDNQSFATESQEGVGLGHSPSSYVNTKEMLTTNPKTEKFEADTDHRTTSFPGAESTAGSEPGSLTPDKEKPSQMTADNTQAAATKQPLETSEYTLSVEPETDSLLGAPEVTVSVSTAVPAASALSDEWDDTKLESVSRIRTPKLGDNEETQVRTEMSQTAQVSHEGMEGGQPWTEAAQVALGLPEGETHTGTALLIAHGNERSPAFTDQSSFTPTSLMEDMKVSIVNLLQSTGDFTESTKENDALFFLETTVSVSVYESEADQLLGNTMKDIITQEMTTAVQEPDATLSMVTQEQVATLELIRDSGKTEEEKEDPSPVSDVPGVTQLSRRWEPLATTISTTVVPLSFEVTPTVEEQMDTVTGPNEEFTPVLGSPVTPPGIMVGEPSISPALPALEASSERRTVVPSITRVNTAASYGLDQLESEEGQEDEDEEDEEDEDEEEEDEEEDEEDKDADSLDEGLDGDTELPGFTLPGITSQEPGLEEGNMDLLEGATYQVPDALEWEQQNQGLVRSWMEKLKDKAGYMSGMLVPVGVGIAGALFILGALYSIKVMNRRRRNGFKRHKRKQREFNSMQDRVMLLADSSEDEF.

Residues 1 to 27 form the signal peptide; the sequence is MRGPIVLHICLAFCSLLLFSVATQCLA. The Extracellular portion of the chain corresponds to 28–714; the sequence is FPKIERRREI…KDKAGYMSGM (687 aa). Residues 41 to 52 show a composition bias toward basic and acidic residues; sequence HAEKGQSDKMNT. Disordered stretches follow at residues 41 to 63 and 97 to 135; these read HAEK…VTSK and QPGQ…ERIS. N57 is a glycosylation site (N-linked (GlcNAc...) asparagine). An N-linked (GlcNAc...) asparagine glycan is attached at N189. Residues 221 to 233 show a composition bias toward basic and acidic residues; that stretch reads KTEKFEADTDHRT. Disordered stretches follow at residues 221 to 275 and 600 to 669; these read KTEK…QPLE and ASYG…PGLE. The span at 258 to 275 shows a compositional bias: polar residues; it reads SQMTADNTQAAATKQPLE. A compositionally biased stretch (acidic residues) spans 607-651; it reads LESEEGQEDEDEEDEEDEDEEEEDEEEDEEDKDADSLDEGLDGDT. A helical membrane pass occupies residues 715 to 735; that stretch reads LVPVGVGIAGALFILGALYSI. Residues 736–774 are Cytoplasmic-facing; sequence KVMNRRRRNGFKRHKRKQREFNSMQDRVMLLADSSEDEF. 2 positions are modified to phosphoserine: S769 and S770.

As to quaternary structure, interacts with IL6ST; this interaction prevents IL6ST protein homodimerization and bridges ARMH4 with IL6R and STAT3 and therefore inhibits phosphorylation of STAT3 at 'Tyr-705'. Interacts (via cytoplasmic tail) with RICTOR; this interaction bridges ARMH4 to the mTORC2 complex and inhibits the mTORC2 kinase activity. In terms of tissue distribution, expressed in podocytes.

The protein localises to the membrane. May modulate immune response and may play a role in inflammation. Down-modulates STAT3 signaling throught direct interaction with IL6ST, resulting in the inhibition of phosphorylation of STAT3 at 'Tyr-705'. May negatively regulates AKT signaling by modulating the activity of mTORC2 complex through RICTOR interaction. The protein is Armadillo-like helical domain-containing protein 4 of Homo sapiens (Human).